A 170-amino-acid polypeptide reads, in one-letter code: Adenine phosphoribosyltransferase (170 aa).

Belongs to the purine/pyrimidine phosphoribosyltransferase family. Homodimer.

The protein resides in the cytoplasm. The enzyme catalyses AMP + diphosphate = 5-phospho-alpha-D-ribose 1-diphosphate + adenine. It functions in the pathway purine metabolism; AMP biosynthesis via salvage pathway; AMP from adenine: step 1/1. Functionally, catalyzes a salvage reaction resulting in the formation of AMP, that is energically less costly than de novo synthesis. The sequence is that of Adenine phosphoribosyltransferase from Streptococcus sanguinis (strain SK36).